The sequence spans 289 residues: Eukaryotic translation initiation factor 3 subunit G (289 aa).

Disordered regions lie at residues 1 to 31 and 151 to 199; these read MSRL…VISN and DTMA…GEKM. The RRM domain maps to 209 to 287; it reads ATLRVTNVSE…LILRVEFAKK (79 aa).

It belongs to the eIF-3 subunit G family. In terms of assembly, component of the eukaryotic translation initiation factor 3 (eIF-3) complex.

The protein localises to the cytoplasm. Its function is as follows. RNA-binding component of the eukaryotic translation initiation factor 3 (eIF-3) complex, which is involved in protein synthesis of a specialized repertoire of mRNAs and, together with other initiation factors, stimulates binding of mRNA and methionyl-tRNAi to the 40S ribosome. The eIF-3 complex specifically targets and initiates translation of a subset of mRNAs involved in cell proliferation. This subunit can bind 18S rRNA. This is Eukaryotic translation initiation factor 3 subunit G from Coccidioides immitis (strain RS) (Valley fever fungus).